Here is a 194-residue protein sequence, read N- to C-terminus: Recombination protein RecR (194 aa).

The C4-type zinc finger occupies 55–70; the sequence is CRECGNLAEGELCPIC. Residues 78-171 form the Toprim domain; the sequence is SLLAVVESVA…RVTRPAYGLP (94 aa).

It belongs to the RecR family.

Its function is as follows. May play a role in DNA repair. It seems to be involved in an RecBC-independent recombinational process of DNA repair. It may act with RecF and RecO. The polypeptide is Recombination protein RecR (Thermus thermophilus (strain ATCC 27634 / DSM 579 / HB8)).